The primary structure comprises 504 residues: Hydroxyisobutyraldehyde dehydrogenase (504 aa).

Glu260 acts as the Proton acceptor in catalysis. Cys294 acts as the Nucleophile in catalysis.

It belongs to the aldehyde dehydrogenase family.

It localises to the cytoplasm. The enzyme catalyses 2-hydroxy-2-methylpropanal + NAD(+) + H2O = 2-hydroxy-2-methylpropanoate + NADH + 2 H(+). Functionally, involved in the degradation of methyl tert-butyl ether (MTBE). Catalyzes the conversion of hydroxyisobutyraldehyde to hydroxyisobutyric acid (HIBA). This Mycolicibacterium austroafricanum (Mycobacterium austroafricanum) protein is Hydroxyisobutyraldehyde dehydrogenase.